A 447-amino-acid polypeptide reads, in one-letter code: Argininosuccinate synthase (447 aa).

ATP-binding positions include 17–25 and A43; that span reads AFSGGLDTS. Residue Y99 participates in L-citrulline binding. The ATP site is built by G129 and T131. L-aspartate contacts are provided by T131, N135, and D136. N135 is an L-citrulline binding site. Residue D136 coordinates ATP. Residues R139 and S192 each contribute to the L-citrulline site. D194 lines the ATP pocket. Residues T201, E203, and E280 each contribute to the L-citrulline site.

Belongs to the argininosuccinate synthase family. Type 2 subfamily. As to quaternary structure, homotetramer.

It localises to the cytoplasm. It catalyses the reaction L-citrulline + L-aspartate + ATP = 2-(N(omega)-L-arginino)succinate + AMP + diphosphate + H(+). It functions in the pathway amino-acid biosynthesis; L-arginine biosynthesis; L-arginine from L-ornithine and carbamoyl phosphate: step 2/3. The sequence is that of Argininosuccinate synthase from Escherichia coli O8 (strain IAI1).